Reading from the N-terminus, the 301-residue chain is Ornithine carbamoyltransferase (301 aa).

Carbamoyl phosphate is bound by residues 46-49 (STRT), glutamine 73, arginine 97, and 124-127 (HPCQ). L-ornithine is bound by residues asparagine 154, aspartate 218, and 222–223 (SM). Carbamoyl phosphate is bound by residues 258–259 (CL) and arginine 286.

It belongs to the aspartate/ornithine carbamoyltransferase superfamily. OTCase family.

Its subcellular location is the cytoplasm. The catalysed reaction is carbamoyl phosphate + L-ornithine = L-citrulline + phosphate + H(+). It participates in amino-acid biosynthesis; L-arginine biosynthesis; L-arginine from L-ornithine and carbamoyl phosphate: step 1/3. In terms of biological role, reversibly catalyzes the transfer of the carbamoyl group from carbamoyl phosphate (CP) to the N(epsilon) atom of ornithine (ORN) to produce L-citrulline. This is Ornithine carbamoyltransferase (argF) from Methanothermobacter thermautotrophicus (strain ATCC 29096 / DSM 1053 / JCM 10044 / NBRC 100330 / Delta H) (Methanobacterium thermoautotrophicum).